A 602-amino-acid chain; its full sequence is Glutamine--fructose-6-phosphate aminotransferase [isomerizing] (602 aa).

Cysteine 2 acts as the Nucleophile; for GATase activity in catalysis. Residues 2-219 (CGIIGYIGDR…DGEYAILTKD (218 aa)) form the Glutamine amidotransferase type-2 domain. SIS domains are found at residues 280–420 (VAEE…VLGT) and 453–592 (LAET…PDKP). Lysine 597 serves as the catalytic For Fru-6P isomerization activity.

In terms of assembly, homodimer.

The protein resides in the cytoplasm. The catalysed reaction is D-fructose 6-phosphate + L-glutamine = D-glucosamine 6-phosphate + L-glutamate. Its function is as follows. Catalyzes the first step in hexosamine metabolism, converting fructose-6P into glucosamine-6P using glutamine as a nitrogen source. The sequence is that of Glutamine--fructose-6-phosphate aminotransferase [isomerizing] from Thermococcus kodakarensis (strain ATCC BAA-918 / JCM 12380 / KOD1) (Pyrococcus kodakaraensis (strain KOD1)).